We begin with the raw amino-acid sequence, 810 residues long: Lon protease (810 aa).

The 195-residue stretch at 32 to 226 (LPAIAMRSNM…RILDILARET (195 aa)) folds into the Lon N-terminal domain. 376–383 (GPPGVGKT) is an ATP binding site. Positions 612–791 (KPMIGVTTGL…EEVLEVALNE (180 aa)) constitute a Lon proteolytic domain. Active-site residues include serine 697 and lysine 740.

The protein belongs to the peptidase S16 family. Homohexamer. Organized in a ring with a central cavity.

The protein localises to the cytoplasm. The catalysed reaction is Hydrolysis of proteins in presence of ATP.. Functionally, ATP-dependent serine protease that mediates the selective degradation of mutant and abnormal proteins as well as certain short-lived regulatory proteins. Required for cellular homeostasis and for survival from DNA damage and developmental changes induced by stress. Degrades polypeptides processively to yield small peptide fragments that are 5 to 10 amino acids long. Binds to DNA in a double-stranded, site-specific manner. This is Lon protease from Fervidobacterium nodosum (strain ATCC 35602 / DSM 5306 / Rt17-B1).